A 181-amino-acid polypeptide reads, in one-letter code: Ribosome maturation factor RimM (181 aa).

A PRC barrel domain is found at 100–177 (EEGFYWMQLI…QIQVDWQLED (78 aa)).

This sequence belongs to the RimM family. Binds ribosomal protein uS19.

It localises to the cytoplasm. An accessory protein needed during the final step in the assembly of 30S ribosomal subunit, possibly for assembly of the head region. Essential for efficient processing of 16S rRNA. May be needed both before and after RbfA during the maturation of 16S rRNA. It has affinity for free ribosomal 30S subunits but not for 70S ribosomes. This is Ribosome maturation factor RimM from Hydrogenovibrio crunogenus (strain DSM 25203 / XCL-2) (Thiomicrospira crunogena).